The sequence spans 261 residues: Transcription repressor OFP15 (261 aa).

A disordered region spans residues 1 to 28; it reads MKLPFLNKNHSTSSYSSNSSSSSWPWPS. Residues 11–28 are compositionally biased toward low complexity; sequence STSSYSSNSSSSSWPWPS. One can recognise an OVATE domain in the interval 112-172; it reads FSLESDDPYS…FAAFVDLLMN (61 aa).

As to quaternary structure, interacts with BLH1 and BLH3. As to expression, expressed in roots, cauline leaves, shoots, flower buds and siliques.

The protein resides in the nucleus. In terms of biological role, transcriptional repressor that regulates multiple aspects of plant growth and development through the regulation of BEL1-LIKE (BLH) and KNOX TALE (KNAT) homeodomain transcription factors. This is Transcription repressor OFP15 (OFP15) from Arabidopsis thaliana (Mouse-ear cress).